The sequence spans 168 residues: Disulfide bond formation protein B 2 (168 aa).

The Cytoplasmic portion of the chain corresponds to 1–14 (MSAPIGATRAERWT). The chain crosses the membrane as a helical span at residues 15–31 (LLAIGVASFELVAGALW). Residues 32 to 49 (IQLAWQEDPCPLCIIQRY) lie on the Periplasmic side of the membrane. An intrachain disulfide couples Cys-41 to Cys-44. The helical transmembrane segment at 50 to 64 (LFLLIALFTFVAAAG) threads the bilayer. Topologically, residues 65–69 (GRRVA) are cytoplasmic. Residues 70–87 (LLRVLSLTTALAGAAVAV) form a helical membrane-spanning segment. At 88 to 142 (RHIYVQAHPGFSCGFDALQPVIDSLPPAHWLPPVFKVGGLCETLYPPILGLSLPM) the chain is on the periplasmic side. Residues Cys-100 and Cys-128 are joined by a disulfide bond. The chain crosses the membrane as a helical span at residues 143-161 (WALVGFSAIAVALGWRIRA). Over 162 to 168 (QAVIRTA) the chain is Cytoplasmic.

This sequence belongs to the DsbB family.

It is found in the cell inner membrane. Functionally, required for disulfide bond formation in some periplasmic proteins. Acts by oxidizing the DsbA protein. This Burkholderia lata (strain ATCC 17760 / DSM 23089 / LMG 22485 / NCIMB 9086 / R18194 / 383) protein is Disulfide bond formation protein B 2.